The sequence spans 337 residues: Heme A synthase (337 aa).

A run of 5 helical transmembrane segments spans residues isoleucine 6–isoleucine 26, phenylalanine 87–phenylalanine 107, leucine 119–valine 139, leucine 154–lysine 174, and leucine 192–valine 212. Histidine 256 serves as a coordination point for heme. 3 helical membrane-spanning segments follow: residues leucine 258–glutamate 278, isoleucine 285–leucine 305, and valine 308–isoleucine 328. Position 316 (histidine 316) interacts with heme.

This sequence belongs to the COX15/CtaA family. Type 2 subfamily. Interacts with CtaB. Requires heme b as cofactor.

Its subcellular location is the cell membrane. The enzyme catalyses Fe(II)-heme o + 2 A + H2O = Fe(II)-heme a + 2 AH2. The protein operates within porphyrin-containing compound metabolism; heme A biosynthesis; heme A from heme O: step 1/1. In terms of biological role, catalyzes the conversion of heme O to heme A by two successive hydroxylations of the methyl group at C8. The first hydroxylation forms heme I, the second hydroxylation results in an unstable dihydroxymethyl group, which spontaneously dehydrates, resulting in the formyl group of heme A. The protein is Heme A synthase of Rickettsia akari (strain Hartford).